We begin with the raw amino-acid sequence, 337 residues long: Alanine racemase (337 aa).

Lys-33 functions as the Proton acceptor; specific for D-alanine in the catalytic mechanism. Position 33 is an N6-(pyridoxal phosphate)lysine (Lys-33). Arg-118 lines the substrate pocket. Tyr-246 serves as the catalytic Proton acceptor; specific for L-alanine. Position 292 (Met-292) interacts with substrate.

The protein belongs to the alanine racemase family. It depends on pyridoxal 5'-phosphate as a cofactor.

It carries out the reaction L-alanine = D-alanine. The protein operates within amino-acid biosynthesis; D-alanine biosynthesis; D-alanine from L-alanine: step 1/1. Catalyzes the interconversion of L-alanine and D-alanine. May also act on other amino acids. The chain is Alanine racemase (alr) from Campylobacter concisus (strain 13826).